Here is a 579-residue protein sequence, read N- to C-terminus: Nuclear hormone receptor family member nhr-47 (579 aa).

The nuclear receptor DNA-binding region spans 8 to 83; it reads GTLCAVCDDI…VGMDKNSIQN (76 aa). NR C4-type zinc fingers lie at residues 11–31 and 47–71; these read CAVC…CNGC and CQGN…LQKC. The segment at 87 to 128 is disordered; that stretch reads RIGYTKRKRRHDDNDMEGGVHHSEHIRDGSSGSPQMNDESPE. Residues 104 to 114 show a composition bias toward basic and acidic residues; it reads GGVHHSEHIRD. One can recognise an NR LBD domain in the interval 164–553; sequence ADLHSYATLE…SLVKETSLGP (390 aa).

Belongs to the nuclear hormone receptor family.

It localises to the nucleus. Functionally, orphan nuclear receptor. The protein is Nuclear hormone receptor family member nhr-47 (nhr-47) of Caenorhabditis elegans.